Reading from the N-terminus, the 215-residue chain is Proapoptotic nucleolar protein 1 (215 aa).

The disordered stretch occupies residues 35-215 (RKGTPTARCL…RLPAPRSAST (181 aa)). A compositionally biased stretch (pro residues) spans 169–180 (PRPPQHLSPPQP). The interval 185–215 (MGAAEGSRRADTHHARRRRRARLPAPRSAST) is necessary for nucleolar localization.

In terms of tissue distribution, widely expressed.

It localises to the nucleus. The protein localises to the nucleolus. Apoptosis-inducing protein that modulates the tumor suppressor function of CDKN2A/p14ARF. Enhances the stability of CDKN2A/p14ARF protein by protecting it from degradation. May act as a tumor suppressor. In Homo sapiens (Human), this protein is Proapoptotic nucleolar protein 1.